The chain runs to 396 residues: Elongation factor Tu (396 aa).

In terms of domain architecture, tr-type G spans K10–E206. Positions G19–T26 are G1. Residue G19–T26 participates in GTP binding. T26 is a binding site for Mg(2+). The interval G60 to N64 is G2. Residues D81–G84 form a G3 region. GTP-binding positions include D81–H85 and N136–D139. Positions N136–D139 are G4. The G5 stretch occupies residues S174–L176.

Belongs to the TRAFAC class translation factor GTPase superfamily. Classic translation factor GTPase family. EF-Tu/EF-1A subfamily. Monomer.

The protein resides in the cytoplasm. It carries out the reaction GTP + H2O = GDP + phosphate + H(+). Functionally, GTP hydrolase that promotes the GTP-dependent binding of aminoacyl-tRNA to the A-site of ribosomes during protein biosynthesis. The chain is Elongation factor Tu from Dechloromonas aromatica (strain RCB).